Here is a 194-residue protein sequence, read N- to C-terminus: MHNLIPTVIEHTGNYERVFDIYSRLLRERIIFLSGEINDLKADTVIAQLLFLESEDSNKDIYLYLNSPGGSITAGLAIYDTMQYIKPDVRTICIGQAASMGAFLLAGGAKGKRESLAYSRIMIHQPWGGISGQASDINIQANEILRLKKLIIDIMSNQIGIDKEKLALDMERDYFMTSNDALKYGLIDSILVRE.

Serine 99 serves as the catalytic Nucleophile. Histidine 124 is a catalytic residue.

It belongs to the peptidase S14 family. As to quaternary structure, fourteen ClpP subunits assemble into 2 heptameric rings which stack back to back to give a disk-like structure with a central cavity, resembling the structure of eukaryotic proteasomes.

It localises to the cytoplasm. It catalyses the reaction Hydrolysis of proteins to small peptides in the presence of ATP and magnesium. alpha-casein is the usual test substrate. In the absence of ATP, only oligopeptides shorter than five residues are hydrolyzed (such as succinyl-Leu-Tyr-|-NHMec, and Leu-Tyr-Leu-|-Tyr-Trp, in which cleavage of the -Tyr-|-Leu- and -Tyr-|-Trp bonds also occurs).. Its function is as follows. Cleaves peptides in various proteins in a process that requires ATP hydrolysis. Has a chymotrypsin-like activity. Plays a major role in the degradation of misfolded proteins. This chain is ATP-dependent Clp protease proteolytic subunit, found in Borrelia garinii subsp. bavariensis (strain ATCC BAA-2496 / DSM 23469 / PBi) (Borreliella bavariensis).